Consider the following 525-residue polypeptide: FNIP repeat-containing protein DDB_G0274617 (525 aa).

The FNIP repeat unit spans residues 65-107 (YQHEIKKEMLPSSIISIIFYNIKNILSSDSIPDTVKFLGFNGY).

This Dictyostelium discoideum (Social amoeba) protein is FNIP repeat-containing protein DDB_G0274617.